We begin with the raw amino-acid sequence, 158 residues long: Ribosome maturation factor RimP (158 aa).

The protein belongs to the RimP family.

The protein localises to the cytoplasm. Its function is as follows. Required for maturation of 30S ribosomal subunits. This chain is Ribosome maturation factor RimP, found in Pseudomonas fluorescens (strain SBW25).